A 401-amino-acid polypeptide reads, in one-letter code: MFAATRLSRLRHDTSRILSHWILPLGWLALLTGMFWVGDRSDYHRLFYILLAAPTLLYVILQPRLLRPLTGSPLFIAFLAFSSYMMLSLSWSTPENSTGSLLKRPLYIALLFFCAAILALEAPLRLKTATWLAALGAVISAAATLLRYYWDANPLRLTGYGALYNPLLSAHVYGAFTALWLAYWMQSRPILAPLPLISLALLGGLLIATGSRTPLVGLTAALMWLVLAGDRKKALIALALALAGALLGYILYPEVITQRGASFRPEIWADALRQISEHPWLGHGYDHPMRIVLSNGMLLADPHNIELGVLFAGGIIGLLLWVAIYALAFGFSWKNRKSPAVLLASTWLVFGLAAGLTEGNAFLPRPKEHWFLIWIPMALLYALWIQQRFAASRRGEDIAAP.

Residues 1-20 (MFAATRLSRLRHDTSRILSH) are Cytoplasmic-facing. The helical transmembrane segment at 21–37 (WILPLGWLALLTGMFWV) threads the bilayer. Residues 38–42 (GDRSD) are Periplasmic-facing. Residues 43-61 (YHRLFYILLAAPTLLYVIL) form a helical membrane-spanning segment. Residues 62 to 72 (QPRLLRPLTGS) are Cytoplasmic-facing. The chain crosses the membrane as a helical span at residues 73 to 92 (PLFIAFLAFSSYMMLSLSWS). Residues 93–103 (TPENSTGSLLK) are Periplasmic-facing. Residues 104 to 122 (RPLYIALLFFCAAILALEA) form a helical membrane-spanning segment. Over 123 to 129 (PLRLKTA) the chain is Cytoplasmic. Residues 130–150 (TWLAALGAVISAAATLLRYYW) traverse the membrane as a helical segment. Topologically, residues 151 to 161 (DANPLRLTGYG) are periplasmic. The chain crosses the membrane as a helical span at residues 162–183 (ALYNPLLSAHVYGAFTALWLAY). The Cytoplasmic segment spans residues 184 to 189 (WMQSRP). A helical membrane pass occupies residues 190 to 208 (ILAPLPLISLALLGGLLIA). The Periplasmic portion of the chain corresponds to 209-212 (TGSR). The helical transmembrane segment at 213-229 (TPLVGLTAALMWLVLAG) threads the bilayer. The Cytoplasmic segment spans residues 230 to 234 (DRKKA). The chain crosses the membrane as a helical span at residues 235–252 (LIALALALAGALLGYILY). The Periplasmic portion of the chain corresponds to 253-306 (PEVITQRGASFRPEIWADALRQISEHPWLGHGYDHPMRIVLSNGMLLADPHNIE). Residues 258–319 (QRGASFRPEI…LFAGGIIGLL (62 aa)) form a WZY-C region. Residues 307–331 (LGVLFAGGIIGLLLWVAIYALAFGF) traverse the membrane as a helical segment. Residues 332–339 (SWKNRKSP) lie on the Cytoplasmic side of the membrane. Residues 340 to 357 (AVLLASTWLVFGLAAGLT) traverse the membrane as a helical segment. Over 358–368 (EGNAFLPRPKE) the chain is Periplasmic. Residues 369 to 385 (HWFLIWIPMALLYALWI) traverse the membrane as a helical segment. Over 386-401 (QQRFAASRRGEDIAAP) the chain is Cytoplasmic.

The protein belongs to the O-antigen ligase family. As to quaternary structure, homodimer.

It localises to the cell inner membrane. The enzyme catalyses a lipid-linked O antigen + a lipid A-core oligosaccharide = a lipopolysaccharide + a polyisoprenyl diphosphate.. It participates in bacterial outer membrane biogenesis; lipopolysaccharide biosynthesis. With respect to regulation, activity does not require ATP and magnesium ions. Transferase involved in the biosynthesis of the lipopolysaccharide (LPS). Catalyzes the transfer of a polymerized O-antigen molecule from its polyprenyl diphosphate membrane anchor to a terminal sugar of the lipid A-core oligosaccharide, finalizing the biosynthesis of the lipopolysaccharide. Required for the attachment of both A-band and B-band O-antigens, two forms of O-antigen produced by P.aeruginosa, onto the lipid A-core receptors. Important for cell wall integrity and motility of the bacteria. This is O-antigen ligase from Pseudomonas aeruginosa (strain ATCC 15692 / DSM 22644 / CIP 104116 / JCM 14847 / LMG 12228 / 1C / PRS 101 / PAO1).